Consider the following 385-residue polypeptide: Ethanolamine kinase 2 (385 aa).

This sequence belongs to the choline/ethanolamine kinase family.

The enzyme catalyses ethanolamine + ATP = phosphoethanolamine + ADP + H(+). Its pathway is phospholipid metabolism; phosphatidylethanolamine biosynthesis; phosphatidylethanolamine from ethanolamine: step 1/3. In terms of biological role, highly specific for ethanolamine phosphorylation. Does not have choline kinase activity. The chain is Ethanolamine kinase 2 (Etnk2) from Rattus norvegicus (Rat).